The following is a 556-amino-acid chain: Putative protein SPATA31F2P (556 aa).

Disordered regions lie at residues 133 to 154 and 210 to 231; these read ALKA…SGSD and LPKT…WVSP. Over residues 144 to 154 the composition is skewed to polar residues; sequence SGGQDNDSGSD.

Belongs to the SPATA31 family.

This is Putative protein SPATA31F2P from Homo sapiens (Human).